Here is a 164-residue protein sequence, read N- to C-terminus: UPF0262 protein Nham_0287 (164 aa).

Belongs to the UPF0262 family.

The sequence is that of UPF0262 protein Nham_0287 from Nitrobacter hamburgensis (strain DSM 10229 / NCIMB 13809 / X14).